A 495-amino-acid chain; its full sequence is MRINPTTSGPAVSTLEEKNLGRIAQIIGPVLDVVFPPGKMPNIYNALVVKGHDTVGQQINVTCEVQQLLGNNRVRAVAMSATDGLTRGMKVIDTGAPLSVPVGGATLGRIFNVLGEPVDNFGPVDTRITSPIHRSAPAFIQLDTKLSIFETGIKVVDLLAPYRRGGKIGLFGGAGVGKTVLIMELINNIAKAHGGVSVFGGVGERTREGNDLYMEMKESGVINEKNIAESKVALVYGQMNEPPGARMRVGLTALTMAEYFRDVNEQDVLLFIDNIFRFVQAGSEVSALLGRMPSAVGYQPTLSTEMGSLQERITSTKEGSITSIQAVYVPADDLTDPAPATTFAHLDATTVLSRGLAAKGIYPAVDPLDSTSTMLQPRIVGEEHYETAQRVKQTLQRYKELQDIIAILGLDELSEEDRLTVARARKIERFLSQPFFVAEVFTGSPGKYVGLPETIRGFQLILSGELDGLPEQAFYLVGNIDEATAKAMNLEGEKK.

172–179 provides a ligand contact to ATP; that stretch reads GGAGVGKT.

This sequence belongs to the ATPase alpha/beta chains family. F-type ATPases have 2 components, CF(1) - the catalytic core - and CF(0) - the membrane proton channel. CF(1) has five subunits: alpha(3), beta(3), gamma(1), delta(1), epsilon(1). CF(0) has four main subunits: a(1), b(1), b'(1) and c(9-12).

It is found in the plastid. The protein localises to the chloroplast thylakoid membrane. The enzyme catalyses ATP + H2O + 4 H(+)(in) = ADP + phosphate + 5 H(+)(out). Its function is as follows. Produces ATP from ADP in the presence of a proton gradient across the membrane. The catalytic sites are hosted primarily by the beta subunits. The sequence is that of ATP synthase subunit beta, chloroplastic from Bowiea volubilis (Climbing onion).